A 281-amino-acid polypeptide reads, in one-letter code: Polyamine aminopropyltransferase (281 aa).

One can recognise a PABS domain in the interval 2–237 (EIWYTEKLEL…GIIGFTFLSN (236 aa)). Q33 is an S-methyl-5'-thioadenosine binding site. Spermidine-binding residues include H64 and D88. Residues E108 and 139–140 (DG) contribute to the S-methyl-5'-thioadenosine site. Catalysis depends on D157, which acts as the Proton acceptor. 157-160 (DSSD) is a binding site for spermidine. Residue P164 coordinates S-methyl-5'-thioadenosine.

This sequence belongs to the spermidine/spermine synthase family. In terms of assembly, homodimer or homotetramer.

The protein localises to the cytoplasm. It catalyses the reaction S-adenosyl 3-(methylsulfanyl)propylamine + putrescine = S-methyl-5'-thioadenosine + spermidine + H(+). Its pathway is amine and polyamine biosynthesis; spermidine biosynthesis; spermidine from putrescine: step 1/1. In terms of biological role, catalyzes the irreversible transfer of a propylamine group from the amino donor S-adenosylmethioninamine (decarboxy-AdoMet) to putrescine (1,4-diaminobutane) to yield spermidine. The sequence is that of Polyamine aminopropyltransferase from Leptospira biflexa serovar Patoc (strain Patoc 1 / Ames).